Consider the following 126-residue polypeptide: C-type natriuretic peptide (126 aa).

The N-terminal stretch at Met1 to Ala23 is a signal peptide. The interval Pro20 to Leu71 is disordered. The propeptide occupies Lys24–Arg73. Residues Gly26 to Pro35 show a composition bias toward pro residues. Gly residues predominate over residues Ala46–Ala62. Cys110 and Cys126 are joined by a disulfide.

The protein belongs to the natriuretic peptide family. Degraded by IDE (in vitro).

It localises to the secreted. Functionally, hormone which plays a role in endochondral ossification through regulation of cartilaginous growth plate chondrocytes proliferation and differentiation. May also be vasoactive and natriuretic. Acts by specifically binding and stimulating NPR2 to produce cGMP. Binds the clearance receptor NPR3. This is C-type natriuretic peptide (NPPC) from Ovis aries (Sheep).